A 164-amino-acid polypeptide reads, in one-letter code: MDLNYQVFTSISKNWWSASLVPVACGWFIGNSYKPRKDYENKKQPKFHPPASAFGPAWTLLYLTMGYASHLAYKADPLMITNASRNGSILYIAQLAANFAWMPLFYGLAKPKLALADLGILTGLVGWLAKTWWPLAPTASKWLIPYLAWLGYAGYLNLGYCLLN.

A run of 5 helical transmembrane segments spans residues 16 to 34 (WSAS…NSYK), 52 to 72 (SAFG…SHLA), 89 to 106 (ILYI…PLFY), 112 to 132 (KLAL…AKTW), and 141 to 163 (KWLI…YCLL).

Belongs to the TspO/BZRP family.

The protein localises to the mitochondrion membrane. Functionally, may play a role in the transport of porphyrins and heme. This Schizosaccharomyces pombe (strain 972 / ATCC 24843) (Fission yeast) protein is Translocator protein homolog.